A 141-amino-acid polypeptide reads, in one-letter code: Hemoglobin subunit alpha (141 aa).

The disordered stretch occupies residues 1–22; sequence VLSEDDKNRVRTSVGKNPELPG. Residues 1–141 enclose the Globin domain; that stretch reads VLSEDDKNRV…VSEVLESKYR (141 aa). Residue histidine 58 coordinates O2. Histidine 87 contributes to the heme b binding site.

This sequence belongs to the globin family. As to quaternary structure, heterotetramer of two alpha chains and two beta chains. As to expression, red blood cells.

Involved in oxygen transport from the lung to the various peripheral tissues. This chain is Hemoglobin subunit alpha (HBA), found in Vipera aspis (Aspic viper).